Consider the following 183-residue polypeptide: Oligoribonuclease (183 aa).

An Exonuclease domain is found at 9–172 (LIWIDLEMTG…DDIRDSISEL (164 aa)). The active site involves Tyr130.

It belongs to the oligoribonuclease family.

Its subcellular location is the cytoplasm. 3'-to-5' exoribonuclease specific for small oligoribonucleotides. The sequence is that of Oligoribonuclease from Acinetobacter baylyi (strain ATCC 33305 / BD413 / ADP1).